The primary structure comprises 698 residues: Long-chain-fatty-acid--CoA ligase 1 (698 aa).

N-acetylmethionine is present on M1. At Y9 the chain carries 3'-nitrotyrosine. The residue at position 84 (Y84) is a Phosphotyrosine. A glycan (O-linked (GlcNAc) serine) is linked at S135. An N6-acetyllysine mark is found at K356 and K386. S620 is modified (phosphoserine). K632 carries the post-translational modification N6-acetyllysine.

Belongs to the ATP-dependent AMP-binding enzyme family. Mg(2+) serves as cofactor.

The protein resides in the microsome membrane. The protein localises to the mitochondrion outer membrane. It localises to the peroxisome membrane. Its subcellular location is the endoplasmic reticulum membrane. It catalyses the reaction a long-chain fatty acid + ATP + CoA = a long-chain fatty acyl-CoA + AMP + diphosphate. The catalysed reaction is (5Z,8Z,11Z,14Z)-eicosatetraenoate + ATP + CoA = (5Z,8Z,11Z,14Z)-eicosatetraenoyl-CoA + AMP + diphosphate. The enzyme catalyses 3,7,11,15-tetramethylhexadecanoate + ATP + CoA = phytanoyl-CoA + AMP + diphosphate. It carries out the reaction hexadecanoate + ATP + CoA = hexadecanoyl-CoA + AMP + diphosphate. It catalyses the reaction (E)-hexadec-2-enoate + ATP + CoA = (2E)-hexadecenoyl-CoA + AMP + diphosphate. The catalysed reaction is 2,6,10,14-tetramethylpentadecanoate + ATP + CoA = pristanoyl-CoA + AMP + diphosphate. The enzyme catalyses 14,15-epoxy-(5Z,8Z,11Z)-eicosatrienoate + ATP + CoA = 14,15-epoxy-(5Z,8Z,11Z)-eicosatrienoyl-CoA + AMP + diphosphate. It carries out the reaction 5-hydroxy-(6E,8Z,11Z,14Z)-eicosatetraenoate + ATP + CoA = 5-hydroxy-(6E,8Z,11Z,14Z)-eicosatetraenoyl-CoA + AMP + diphosphate. It catalyses the reaction 12-hydroxy-(5Z,8Z,10E,14Z)-eicosatetraenoate + ATP + CoA = 12-hydroxy-(5Z,8Z,10E,14Z)-eicosatetraenoyl-CoA + AMP + diphosphate. The catalysed reaction is 15-hydroxy-(5Z,8Z,11Z,13E)-eicosatetraenoate + ATP + CoA = 15-hydroxy-(5Z,8Z,11Z,13E)-eicosatetraenoyl-CoA + AMP + diphosphate. The enzyme catalyses (9Z)-octadecenoate + ATP + CoA = (9Z)-octadecenoyl-CoA + AMP + diphosphate. Inhibited at high temperature and by arachidonate. In terms of biological role, catalyzes the conversion of long-chain fatty acids to their active form acyl-CoAs for both synthesis of cellular lipids, and degradation via beta-oxidation. Preferentially uses palmitoleate, oleate and linoleate. Preferentially activates arachidonate than epoxyeicosatrienoic acids (EETs) or hydroxyeicosatrienoic acids (HETEs). The polypeptide is Long-chain-fatty-acid--CoA ligase 1 (Cavia porcellus (Guinea pig)).